A 454-amino-acid chain; its full sequence is NADP-specific glutamate dehydrogenase (454 aa).

Ser-2 is modified (N-acetylserine). Residue Lys-114 is part of the active site.

This sequence belongs to the Glu/Leu/Phe/Val dehydrogenases family. In terms of assembly, homohexamer.

It catalyses the reaction L-glutamate + NADP(+) + H2O = 2-oxoglutarate + NH4(+) + NADPH + H(+). The protein is NADP-specific glutamate dehydrogenase (gdh) of Neurospora crassa (strain ATCC 24698 / 74-OR23-1A / CBS 708.71 / DSM 1257 / FGSC 987).